Here is a 241-residue protein sequence, read N- to C-terminus: 3-deoxy-manno-octulosonate cytidylyltransferase (241 aa).

Belongs to the KdsB family.

It is found in the cytoplasm. The enzyme catalyses 3-deoxy-alpha-D-manno-oct-2-ulosonate + CTP = CMP-3-deoxy-beta-D-manno-octulosonate + diphosphate. It participates in nucleotide-sugar biosynthesis; CMP-3-deoxy-D-manno-octulosonate biosynthesis; CMP-3-deoxy-D-manno-octulosonate from 3-deoxy-D-manno-octulosonate and CTP: step 1/1. Its pathway is bacterial outer membrane biogenesis; lipopolysaccharide biosynthesis. In terms of biological role, activates KDO (a required 8-carbon sugar) for incorporation into bacterial lipopolysaccharide in Gram-negative bacteria. This is 3-deoxy-manno-octulosonate cytidylyltransferase from Rickettsia typhi (strain ATCC VR-144 / Wilmington).